A 410-amino-acid chain; its full sequence is Aspartic proteinase Asp1 (410 aa).

The N-terminal stretch at 1-23 is a signal peptide; that stretch reads MTARLALLASLLLLLQLVPPSSA. A propeptide spans 24-46 (removed in mature form); that stretch reads VVLELHGNVYPIGHFFVTMNIGD. The region spanning 38–392 is the Peptidase A1 domain; sequence FFVTMNIGDP…DSERSLLGWV (355 aa). Active-site residues include aspartate 56 and aspartate 257.

The protein belongs to the peptidase A1 family. Expressed in pollen, nucellus, ovary wall, shoot and root meristem, coleoptiles of immature seeds, and somatic embryos.

Its function is as follows. Possesses protease activity in vitro. This Oryza sativa subsp. indica (Rice) protein is Aspartic proteinase Asp1 (ASP1).